An 81-amino-acid chain; its full sequence is Photosystem I iron-sulfur center (81 aa).

4Fe-4S ferredoxin-type domains lie at 2 to 31 (SHTV…MVPW) and 39 to 68 (IASS…IRVY). Positions 11, 14, 17, 21, 48, 51, 54, and 58 each coordinate [4Fe-4S] cluster.

In terms of assembly, the cyanobacterial PSI reaction center is composed of one copy each of PsaA,B,C,D,E,F,I,J,K,L,M and X, and forms trimeric complexes. Requires [4Fe-4S] cluster as cofactor.

Its subcellular location is the cellular thylakoid membrane. It carries out the reaction reduced [plastocyanin] + hnu + oxidized [2Fe-2S]-[ferredoxin] = oxidized [plastocyanin] + reduced [2Fe-2S]-[ferredoxin]. Functionally, apoprotein for the two 4Fe-4S centers FA and FB of photosystem I (PSI); essential for photochemical activity. FB is the terminal electron acceptor of PSI, donating electrons to ferredoxin. The C-terminus interacts with PsaA/B/D and helps assemble the protein into the PSI complex. Required for binding of PsaD and PsaE to PSI. PSI is a plastocyanin/cytochrome c6-ferredoxin oxidoreductase, converting photonic excitation into a charge separation, which transfers an electron from the donor P700 chlorophyll pair to the spectroscopically characterized acceptors A0, A1, FX, FA and FB in turn. In Mastigocladus laminosus (Fischerella sp.), this protein is Photosystem I iron-sulfur center.